The primary structure comprises 123 residues: Large ribosomal subunit protein uL14 (123 aa).

It belongs to the universal ribosomal protein uL14 family. Part of the 50S ribosomal subunit. Forms a cluster with proteins L3 and L19. In the 70S ribosome, L14 and L19 interact and together make contacts with the 16S rRNA in bridges B5 and B8.

In terms of biological role, binds to 23S rRNA. Forms part of two intersubunit bridges in the 70S ribosome. The polypeptide is Large ribosomal subunit protein uL14 (Erwinia tasmaniensis (strain DSM 17950 / CFBP 7177 / CIP 109463 / NCPPB 4357 / Et1/99)).